The sequence spans 273 residues: Proteasome subunit beta type-5-B (273 aa).

Positions 1–57 (MKLDTSGLETTMPVIGFGSNSEMLDGFSSAPSFDLPRTTDFDGFQKKAVEMVKPAKG) are cleaved as a propeptide — removed in mature form. The Nucleophile role is filled by Thr58.

The protein belongs to the peptidase T1B family. Component of the 20S core complex of the 26S proteasome. The 26S proteasome is composed of a core protease (CP), known as the 20S proteasome, capped at one or both ends by the 19S regulatory particle (RP/PA700). The 20S proteasome core is composed of 28 subunits that are arranged in four stacked rings, resulting in a barrel-shaped structure. The two end rings are each formed by seven alpha subunits, and the two central rings are each formed by seven beta subunits. The catalytic chamber with the active sites is on the inside of the barrel.

Its subcellular location is the cytoplasm. It localises to the nucleus. The enzyme catalyses Cleavage of peptide bonds with very broad specificity.. Functionally, the proteasome is a multicatalytic proteinase complex which is characterized by its ability to cleave peptides with Arg, Phe, Tyr, Leu, and Glu adjacent to the leaving group at neutral or slightly basic pH. The proteasome has an ATP-dependent proteolytic activity. The sequence is that of Proteasome subunit beta type-5-B (PBE2) from Arabidopsis thaliana (Mouse-ear cress).